The chain runs to 377 residues: Leucine aminopeptidase A (377 aa).

The signal sequence occupies residues 1-18 (MRFLPCIATLAATASALA). A propeptide spanning residues 19 to 79 (IGDHVRSDDQ…SNKKQKLAVT (61 aa)) is cleaved from the precursor. The N-linked (GlcNAc...) asparagine glycan is linked to N87. Positions 176, 195, 234, and 261 each coordinate Zn(2+). A glycan (N-linked (GlcNAc...) asparagine) is linked at N288. C310 and C314 are joined by a disulfide. H343 is a Zn(2+) binding site.

It belongs to the peptidase M28 family. M28E subfamily. As to quaternary structure, monomer. Zn(2+) is required as a cofactor.

The protein localises to the secreted. Calcium, magnesium and manganese cations reduce peptidase activity to 20.3-51.3 percent. The metal ion chelating reagent EDTA almost completely inhibits activity. The protease inhibitor bacitracin and the aminopeptidase B inhibitor bestatin, as well as DTT and beta-mercaptoethanol act also as lap A inhibitorsD. Its function is as follows. Extracellular aminopeptidase that allows assimilation of proteinaceous substrates. This is Leucine aminopeptidase A (lapA) from Aspergillus oryzae (strain ATCC 42149 / RIB 40) (Yellow koji mold).